Reading from the N-terminus, the 1737-residue chain is Myosin-M heavy chain (1737 aa).

In terms of domain architecture, Myosin N-terminal SH3-like spans 4–55 (LEGDIVWVPHTVNGYCRGKIIGYNEKNQVTVRLLELNEEIKINEQLIQNYNQ). The 828-residue stretch at 59–886 (KDFSDMVEIQ…LYIYLEKKRY (828 aa)) folds into the Myosin motor domain. Residue 154–161 (GESGSGKT) coordinates ATP. The disordered stretch occupies residues 640-727 (KSNDNNSNNN…NNNSSNNKKS (88 aa)). 2 stretches are compositionally biased toward low complexity: residues 641-663 (SNDN…SSQS) and 679-724 (NSGS…SSNN). An actin-binding region spans residues 754-761 (YIRCIKPN). IQ domains are found at residues 889 to 918 (LVDS…SSLF) and 912 to 941 (NKES…LENK). A coiled-coil region spans residues 926–1039 (QRAKKDFEQL…KKKNEQNLSL (114 aa)). The segment covering 947–1028 (RKKELERQRK…IEKKRKEEEK (82 aa)) has biased composition (basic and acidic residues). Disordered stretches follow at residues 947–1099 (RKKE…PSTK), 1117–1199 (LHGS…PNFN), 1266–1290 (GINK…ANSS), and 1304–1364 (SLST…SNED). Residues 1044-1070 (ITNSPSLINTTTTTTTTTTTTTNTSSP) show a composition bias toward low complexity. Positions 1071-1081 (PLSPPISPRPS) are enriched in pro residues. The span at 1082 to 1098 (TPSSTSSSSSTTSSPST) shows a compositional bias: low complexity. A compositionally biased stretch (basic and acidic residues) spans 1121–1131 (SHSDKNSKEDN). The span at 1132-1141 (NSNNNNNGDS) shows a compositional bias: low complexity. A compositionally biased stretch (polar residues) spans 1143-1153 (IILSSDSSFGQ). Positions 1162–1171 (PTPPPPPPLK) are enriched in pro residues. 2 stretches are compositionally biased toward polar residues: residues 1180–1198 (GVEN…SPNF) and 1274–1288 (RTIS…SRAN). Residues 1304 to 1359 (SLSTSTTPSTPTTPKTPTTLSSSSVSTSTSLSSVSSSVSSSSSSSIPTPIIESTPS) are compositionally biased toward low complexity. Positions 1389-1572 (FRIKIINELI…SDIVQSINEA (184 aa)) constitute a DH domain. In terms of domain architecture, PH spans 1603-1714 (TLLMEGTVSA…WFKQIKALIQ (112 aa)).

This sequence belongs to the TRAFAC class myosin-kinesin ATPase superfamily. Myosin family. As to quaternary structure, monomer.

The protein localises to the cytoplasm. Myosins are actin-based motor molecules with ATPase activity. Involved in macropinocytosis and remodeling of actin cytoskeleton. This chain is Myosin-M heavy chain (myoM), found in Dictyostelium discoideum (Social amoeba).